Reading from the N-terminus, the 336-residue chain is Apyrase (336 aa).

Positions 1-21 are cleaved as a signal peptide; that stretch reads MFLKFCVVAFAICLSINLSEG. The N-linked (GlcNAc...) asparagine glycan is linked to Asn-209.

The protein belongs to the apyrase family. The cofactor is Ca(2+). In terms of tissue distribution, salivary gland (at protein level).

It is found in the secreted. It carries out the reaction a ribonucleoside 5'-triphosphate + 2 H2O = a ribonucleoside 5'-phosphate + 2 phosphate + 2 H(+). Functionally, facilitates hematophagy by inhibiting ADP- and collagen-dependent platelet aggregation in the host. Cleaves adenosine triphosphate (ATP) and adenosine diphosphate (ADP) to adenosine monophosphate (AMP) and inorganic phosphate in calcium-dependent manner. In Phlebotomus duboscqi (Sandfly), this protein is Apyrase.